Consider the following 207-residue polypeptide: NAD(P)H dehydrogenase (quinone) (207 aa).

Residues 3–194 (VQIIFYSMYG…EMAKFQGRHV (192 aa)) enclose the Flavodoxin-like domain. Residues 9 to 14 (SMYGHI) and 82 to 84 (TRF) each bind FMN. Residue Tyr-11 participates in NAD(+) binding. Trp-102 lines the substrate pocket. Residues 117–123 (STATQHG) and His-138 contribute to the FMN site.

The protein belongs to the WrbA family. FMN serves as cofactor.

The catalysed reaction is a quinone + NADH + H(+) = a quinol + NAD(+). The enzyme catalyses a quinone + NADPH + H(+) = a quinol + NADP(+). The polypeptide is NAD(P)H dehydrogenase (quinone) (Aromatoleum aromaticum (strain DSM 19018 / LMG 30748 / EbN1) (Azoarcus sp. (strain EbN1))).